The sequence spans 404 residues: Peroxisomal biogenesis factor 9 (404 aa).

A run of 3 helical transmembrane segments spans residues 73 to 93 (FLFLGVTLFLFLSLLQQSLVF), 94 to 114 (LLGVFLRLVQLVGHFLLLLMG), and 149 to 169 (FGLDVVTAIVVIGDNELFQVV). Residues 180-214 (DGQRSQQSQNSGMNVASSSRGRHQLVPDRPGSQLS) are disordered. Positions 181–198 (GQRSQQSQNSGMNVASSS) are enriched in polar residues. A helical membrane pass occupies residues 349-369 (FFVGLVSWIVDETAACVVFCL).

It is found in the peroxisome membrane. Essential for the import of peroxisomal matrix proteins. The protein is Peroxisomal biogenesis factor 9 (PEX9) of Yarrowia lipolytica (strain CLIB 122 / E 150) (Yeast).